Consider the following 113-residue polypeptide: UPF0342 protein MGAS10750_Spy0713 (113 aa).

Belongs to the UPF0342 family.

In Streptococcus pyogenes serotype M4 (strain MGAS10750), this protein is UPF0342 protein MGAS10750_Spy0713.